The following is a 648-amino-acid chain: Threonine--tRNA ligase (648 aa).

One can recognise a TGS domain in the interval 1–63; that stretch reads MSQISLTFPD…AASGRIAINT (63 aa). Residues 247–544 form a catalytic region; sequence DHRKLGREME…LIENYSGKLP (298 aa). Cys-344, His-395, and His-521 together coordinate Zn(2+).

It belongs to the class-II aminoacyl-tRNA synthetase family. In terms of assembly, homodimer. Requires Zn(2+) as cofactor.

The protein resides in the cytoplasm. The catalysed reaction is tRNA(Thr) + L-threonine + ATP = L-threonyl-tRNA(Thr) + AMP + diphosphate + H(+). Catalyzes the attachment of threonine to tRNA(Thr) in a two-step reaction: L-threonine is first activated by ATP to form Thr-AMP and then transferred to the acceptor end of tRNA(Thr). Also edits incorrectly charged L-seryl-tRNA(Thr). This is Threonine--tRNA ligase from Paracoccus denitrificans (strain Pd 1222).